A 176-amino-acid polypeptide reads, in one-letter code: Ribosome maturation factor RimM (176 aa).

The region spanning 94 to 176 (KDEFFYFEIL…RFGFEILQNS (83 aa)) is the PRC barrel domain.

It belongs to the RimM family. Binds ribosomal protein uS19.

Its subcellular location is the cytoplasm. In terms of biological role, an accessory protein needed during the final step in the assembly of 30S ribosomal subunit, possibly for assembly of the head region. Essential for efficient processing of 16S rRNA. May be needed both before and after RbfA during the maturation of 16S rRNA. It has affinity for free ribosomal 30S subunits but not for 70S ribosomes. The chain is Ribosome maturation factor RimM from Campylobacter hominis (strain ATCC BAA-381 / DSM 21671 / CCUG 45161 / LMG 19568 / NCTC 13146 / CH001A).